Consider the following 81-residue polypeptide: Photosystem I iron-sulfur center (81 aa).

4Fe-4S ferredoxin-type domains lie at 2–31 (SHAVKIYDTCIGCTQCVRACPLDVLEMVPW) and 37–68 (GQIASSPRTEDCVGCKRCETACPTDFLSIRVY). The [4Fe-4S] cluster site is built by C11, C14, C17, C21, C48, C51, C54, and C58.

The cyanobacterial PSI reaction center is composed of one copy each of PsaA,B,C,D,E,F,I,J,K,L,M and X, and forms trimeric complexes. Requires [4Fe-4S] cluster as cofactor.

It localises to the cellular thylakoid membrane. The enzyme catalyses reduced [plastocyanin] + hnu + oxidized [2Fe-2S]-[ferredoxin] = oxidized [plastocyanin] + reduced [2Fe-2S]-[ferredoxin]. In terms of biological role, apoprotein for the two 4Fe-4S centers FA and FB of photosystem I (PSI); essential for photochemical activity. FB is the terminal electron acceptor of PSI, donating electrons to ferredoxin. The C-terminus interacts with PsaA/B/D and helps assemble the protein into the PSI complex. Required for binding of PsaD and PsaE to PSI. PSI is a plastocyanin/cytochrome c6-ferredoxin oxidoreductase, converting photonic excitation into a charge separation, which transfers an electron from the donor P700 chlorophyll pair to the spectroscopically characterized acceptors A0, A1, FX, FA and FB in turn. This is Photosystem I iron-sulfur center from Synechococcus sp. (strain WH7803).